The following is a 237-amino-acid chain: Demethylmenaquinone methyltransferase (237 aa).

Residues threonine 58, aspartate 79, and 106 to 107 each bind S-adenosyl-L-methionine; that span reads NA.

The protein belongs to the class I-like SAM-binding methyltransferase superfamily. MenG/UbiE family.

The enzyme catalyses a 2-demethylmenaquinol + S-adenosyl-L-methionine = a menaquinol + S-adenosyl-L-homocysteine + H(+). The protein operates within quinol/quinone metabolism; menaquinone biosynthesis; menaquinol from 1,4-dihydroxy-2-naphthoate: step 2/2. In terms of biological role, methyltransferase required for the conversion of demethylmenaquinol (DMKH2) to menaquinol (MKH2). The chain is Demethylmenaquinone methyltransferase from Bacillus cereus (strain B4264).